The chain runs to 228 residues: Cytidylate kinase (228 aa).

Residue 17-25 (GPTASGKGT) coordinates ATP.

Belongs to the cytidylate kinase family. Type 1 subfamily.

It is found in the cytoplasm. It catalyses the reaction CMP + ATP = CDP + ADP. The catalysed reaction is dCMP + ATP = dCDP + ADP. The polypeptide is Cytidylate kinase (Burkholderia ambifaria (strain ATCC BAA-244 / DSM 16087 / CCUG 44356 / LMG 19182 / AMMD) (Burkholderia cepacia (strain AMMD))).